The chain runs to 306 residues: UDP-3-O-acyl-N-acetylglucosamine deacetylase (306 aa).

Positions 79, 238, and 242 each coordinate Zn(2+). His265 (proton donor) is an active-site residue.

It belongs to the LpxC family. It depends on Zn(2+) as a cofactor.

It catalyses the reaction a UDP-3-O-[(3R)-3-hydroxyacyl]-N-acetyl-alpha-D-glucosamine + H2O = a UDP-3-O-[(3R)-3-hydroxyacyl]-alpha-D-glucosamine + acetate. It participates in glycolipid biosynthesis; lipid IV(A) biosynthesis; lipid IV(A) from (3R)-3-hydroxytetradecanoyl-[acyl-carrier-protein] and UDP-N-acetyl-alpha-D-glucosamine: step 2/6. Functionally, catalyzes the hydrolysis of UDP-3-O-myristoyl-N-acetylglucosamine to form UDP-3-O-myristoylglucosamine and acetate, the committed step in lipid A biosynthesis. In Yersinia pseudotuberculosis serotype O:1b (strain IP 31758), this protein is UDP-3-O-acyl-N-acetylglucosamine deacetylase.